We begin with the raw amino-acid sequence, 190 residues long: Xanthine phosphoribosyltransferase (190 aa).

Positions 20 and 27 each coordinate xanthine. Alanine 128 to alanine 132 provides a ligand contact to 5-phospho-alpha-D-ribose 1-diphosphate. Lysine 156 provides a ligand contact to xanthine.

This sequence belongs to the purine/pyrimidine phosphoribosyltransferase family. Xpt subfamily. As to quaternary structure, homodimer.

It localises to the cytoplasm. It catalyses the reaction XMP + diphosphate = xanthine + 5-phospho-alpha-D-ribose 1-diphosphate. It functions in the pathway purine metabolism; XMP biosynthesis via salvage pathway; XMP from xanthine: step 1/1. Its function is as follows. Converts the preformed base xanthine, a product of nucleic acid breakdown, to xanthosine 5'-monophosphate (XMP), so it can be reused for RNA or DNA synthesis. This Pseudomonas paraeruginosa (strain DSM 24068 / PA7) (Pseudomonas aeruginosa (strain PA7)) protein is Xanthine phosphoribosyltransferase.